The primary structure comprises 496 residues: Xylulose kinase (496 aa).

83-84 (MH) is a binding site for substrate. Aspartate 237 functions as the Proton acceptor in the catalytic mechanism.

Belongs to the FGGY kinase family.

The enzyme catalyses D-xylulose + ATP = D-xylulose 5-phosphate + ADP + H(+). In terms of biological role, catalyzes the phosphorylation of D-xylulose to D-xylulose 5-phosphate. The polypeptide is Xylulose kinase (Staphylococcus epidermidis (strain ATCC 12228 / FDA PCI 1200)).